A 583-amino-acid polypeptide reads, in one-letter code: Tetratricopeptide repeat protein 39C (583 aa).

The disordered stretch occupies residues 1-22 (MAGSEQQRPRRRDDGDSDAAAA). 3 TPR repeats span residues 315–348 (SLFMFFKGRIQRLECQINSALTSFHTALELAVDQ), 353–386 (HVCLYEIGWCSMIELNFKDAFDSFERLKNESRWS), and 485–518 (GLKYLLLGAIHKCLGNSEDAVQYFQRAVKDELCR).

Belongs to the TTC39 family.

This chain is Tetratricopeptide repeat protein 39C (TTC39C), found in Homo sapiens (Human).